We begin with the raw amino-acid sequence, 152 residues long: ARL14 effector protein-like (152 aa).

A disordered region spans residues 1–21 (MNEQSEKNNSIQERHTDHSFP).

This Homo sapiens (Human) protein is ARL14 effector protein-like (ARL14EPL).